A 467-amino-acid chain; its full sequence is Dihydrolipoyl dehydrogenase 3 (467 aa).

FAD is bound by residues 34 to 43, Lys-52, and Ala-116; that span reads EGRETLGGTC. Cys-43 and Cys-48 are joined by a disulfide. NAD(+) contacts are provided by residues 182–186, Glu-205, Val-239, and 272–275; these read GAGVI and AIGR. FAD is bound by residues Asp-314 and Ala-322. The Proton acceptor role is filled by His-446.

This sequence belongs to the class-I pyridine nucleotide-disulfide oxidoreductase family. As to quaternary structure, homodimer. FAD is required as a cofactor.

It is found in the cytoplasm. It catalyses the reaction N(6)-[(R)-dihydrolipoyl]-L-lysyl-[protein] + NAD(+) = N(6)-[(R)-lipoyl]-L-lysyl-[protein] + NADH + H(+). Its function is as follows. LPD-3 may substitute for lipoamide dehydrogenase of the 2-oxoglutarate dehydrogenase and pyruvate multienzyme complexes when the latter is inactive or missing. This chain is Dihydrolipoyl dehydrogenase 3 (lpd3), found in Pseudomonas aeruginosa (strain ATCC 15692 / DSM 22644 / CIP 104116 / JCM 14847 / LMG 12228 / 1C / PRS 101 / PAO1).